Reading from the N-terminus, the 778-residue chain is Aconitate hydratase, mitochondrial (778 aa).

Residues 1 to 16 constitute a mitochondrion transit peptide; sequence MLSARSAIKRPIVRGL. Substrate-binding positions include Gln-95 and 188-190; that span reads DSH. Cys-382 provides a ligand contact to [4Fe-4S] cluster. Ser-391 bears the Phosphoserine mark. Position 409 is a phosphothreonine (Thr-409). The [4Fe-4S] cluster site is built by Cys-445 and Cys-448. The substrate site is built by Arg-471 and Arg-476. Phosphoserine is present on Ser-556. Residues Arg-604 and 667–668 each bind substrate; that span reads SR.

It belongs to the aconitase/IPM isomerase family. Monomer. Binds to mitochondrial DNA (mtDNA) and identified as component of mitochondrial nucleoids. It depends on [4Fe-4S] cluster as a cofactor.

Its subcellular location is the mitochondrion. It localises to the cytoplasm. It catalyses the reaction citrate = D-threo-isocitrate. It participates in carbohydrate metabolism; tricarboxylic acid cycle; isocitrate from oxaloacetate: step 2/2. Its activity is regulated as follows. Subject to catabolite regulation. Its function is as follows. Catalyzes the isomerization of citrate to isocitrate via cis-aconitate, a step in the citric acid cycle. Can also provide minor contributions to the reversible dehydration of (R)-homocitrate to cis-homoaconitate, a step in the alpha-aminoadipate pathway for lysine biosynthesis. Also plays an essential role in mtDNA maintenance. May directly protect mtDNA from accumulation of point mutations and ssDNA breaks as a component of mitochondrial nucleoids, or by preventing accumulation of iron citrate thereby alleviating its detrimental effects in mitochondria. This Saccharomyces cerevisiae (strain ATCC 204508 / S288c) (Baker's yeast) protein is Aconitate hydratase, mitochondrial.